A 262-amino-acid polypeptide reads, in one-letter code: Carboxy-S-adenosyl-L-methionine synthase (262 aa).

Residues Tyr-50, Gly-84–Ser-86, Asp-137–Ile-138, Asn-152, and Arg-219 contribute to the S-adenosyl-L-methionine site.

It belongs to the class I-like SAM-binding methyltransferase superfamily. Cx-SAM synthase family. As to quaternary structure, homodimer.

The enzyme catalyses prephenate + S-adenosyl-L-methionine = carboxy-S-adenosyl-L-methionine + 3-phenylpyruvate + H2O. In terms of biological role, catalyzes the conversion of S-adenosyl-L-methionine (SAM) to carboxy-S-adenosyl-L-methionine (Cx-SAM). The chain is Carboxy-S-adenosyl-L-methionine synthase from Psychrobacter arcticus (strain DSM 17307 / VKM B-2377 / 273-4).